Here is a 699-residue protein sequence, read N- to C-terminus: DNA ligase (699 aa).

Residues 47–51, 96–97, and E128 contribute to the NAD(+) site; these read DAQYD and SL. Catalysis depends on K130, which acts as the N6-AMP-lysine intermediate. R151, E186, K303, and K327 together coordinate NAD(+). Zn(2+)-binding residues include C422, C425, C440, and C446. Positions 620–699 constitute a BRCT domain; sequence GDNLLLSNQT…EEWIKMVNEL (80 aa).

It belongs to the NAD-dependent DNA ligase family. LigA subfamily. Mg(2+) serves as cofactor. The cofactor is Mn(2+).

It catalyses the reaction NAD(+) + (deoxyribonucleotide)n-3'-hydroxyl + 5'-phospho-(deoxyribonucleotide)m = (deoxyribonucleotide)n+m + AMP + beta-nicotinamide D-nucleotide.. In terms of biological role, DNA ligase that catalyzes the formation of phosphodiester linkages between 5'-phosphoryl and 3'-hydroxyl groups in double-stranded DNA using NAD as a coenzyme and as the energy source for the reaction. It is essential for DNA replication and repair of damaged DNA. This is DNA ligase from Orientia tsutsugamushi (strain Ikeda) (Rickettsia tsutsugamushi).